The chain runs to 115 residues: MPMFIVNTNVPRASVPEGFLSELTQQLAQATGKPAQYIAVHVVPDQLMTFSGTSDPCALCSLHSIGKIGGAQNRNYSKLLCGLLSDRLHISPDRVYINYYDMNAANVGWNGSTFA.

Pro-2 (proton acceptor; via imino nitrogen) is an active-site residue. Substrate is bound by residues Lys-33 and Ile-65. An N6-acetyllysine; alternate modification is found at Lys-78. Lys-78 is modified (N6-succinyllysine; alternate). Asn-98 provides a ligand contact to substrate.

Belongs to the MIF family. Homotrimer. Interacts with CXCR2 extracellular domain. Interacts with the CD74 extracellular domain, USO1, COPS5 and BNIPL. Expressed in a wide variety of organs including brain, spleen, liver, muscle and kidney.

The protein localises to the secreted. It localises to the cytoplasm. The catalysed reaction is 3-phenylpyruvate = enol-phenylpyruvate. It carries out the reaction L-dopachrome = 5,6-dihydroxyindole-2-carboxylate. Its function is as follows. Pro-inflammatory cytokine involved in the innate immune response to bacterial pathogens. The expression of MIF at sites of inflammation suggests a role as mediator in regulating the function of macrophages in host defense. Counteracts the anti-inflammatory activity of glucocorticoids. Has phenylpyruvate tautomerase and dopachrome tautomerase activity (in vitro), but the physiological substrate is not known. It is not clear whether the tautomerase activity has any physiological relevance, and whether it is important for cytokine activity. This is Macrophage migration inhibitory factor (Mif) from Rattus norvegicus (Rat).